A 601-amino-acid chain; its full sequence is Keratin, type II cytoskeletal 5 (601 aa).

Residues 1 to 168 (MSRQSTVSFR…DPTIQRVRTE (168 aa)) form a head region. A phosphoserine mark is found at Ser-5, Ser-8, Ser-16, and Ser-21. Thr-24 is modified (phosphothreonine; by CDK1). 6 positions are modified to phosphoserine: Ser-26, Ser-36, Ser-50, Ser-64, Ser-71, and Ser-75. The residue at position 152 (Thr-152) is a Phosphothreonine; by CDK1. Thr-167 is modified (phosphothreonine; by AURKB). The interval 169 to 204 (EREQIKTLNNKFASFIDKVRFLEQQNKVLDTKWALL) is coil 1A. An IF rod domain is found at 169–482 (EREQIKTLNN…KLLEGEECRL (314 aa)). The linker 1 stretch occupies residues 205-223 (QEQGTKTVRQNLEPLLEQY). A coil 1B region spans residues 224–316 (INNLRRQLDG…FFDAELSQMQ (93 aa)). The interval 317–339 (THVSDTSVVLSMDNNRSLDLDSI) is linker 12. The segment at 340 to 478 (IAEVKAQYED…ATYRKLLEGE (139 aa)) is coil 2. The tract at residues 479-601 (ECRLSGEGVG…TSSSRKSFKS (123 aa)) is tail. Positions 576–601 (FGSGGGSSSSVKFVSTTSSSRKSFKS) are disordered. The segment covering 583–601 (SSSVKFVSTTSSSRKSFKS) has biased composition (low complexity).

Belongs to the intermediate filament family. As to quaternary structure, heterodimer of a type I and a type II keratin. Heterodimer with type I keratin KRT25 leading to the formation of keratin intermediate filament (KIF) network. Forms a heterodimer (via 2B domains) with KRT14 (via 2B domains). Interacts with TCHP. Interacts with EPPK1. Interacts with AMELX. Interacts with PKP1 (via N-terminus) and PKP2. Phosphorylated by CDK1, AURKB and Rho-kinase, phosphorylation is regulated by the cell cycle. Thr-24 phosphorylation, mediated by CDK1, peaks during prometaphase or metaphase cells with phosphorylated filamentous structures evident throughout the cytoplasm early mitosis. CDK1 phosphorylates Thr-24 in mitotic cells at the site of injury. Post-translationally, O-glycosylated.

It is found in the cytoplasm. Required for the formation of keratin intermediate filaments in the basal epidermis and maintenance of the skin barrier in response to mechanical stress. Regulates the recruitment of Langerhans cells to the epidermis, potentially by modulation of the abundance of macrophage chemotactic cytokines, macrophage inflammatory cytokines and CTNND1 localization in keratinocytes. This is Keratin, type II cytoskeletal 5 from Bos taurus (Bovine).